Reading from the N-terminus, the 298-residue chain is Apolipoprotein E (298 aa).

An N-terminal signal peptide occupies residues 1–18 (MKVLWAALVVTLLAGCRA). A run of 8 repeats spans residues 74 to 95 (LLIE…KELG), 96 to 117 (PVAE…ARLG), 118 to 139 (ADME…AMLG), 140 to 161 (QSSE…RRLQ), 162 to 183 (RDID…EGAE), 184 to 204 (RGVS…RLQA), 205 to 222 (LASQ…EQMR), and 223 to 244 (GRLE…EQME). The tract at residues 74–244 (LLIEDTMKEV…RLEEVREQME (171 aa)) is 8 X 22 AA approximate tandem repeats. Methionine 137 is subject to Methionine sulfoxide. At serine 141 the chain carries Phosphoserine. Positions 152-162 (HPRKMKRRLQR) are LDL and other lipoprotein receptors binding. 156–159 (MKRR) is a binding site for heparin. 218–225 (GEQMRGRL) serves as a coordination point for heparin. The interval 260–272 (RLKSWFEPMMEDM) is specificity for association with VLDL.

The protein belongs to the apolipoprotein A1/A4/E family. In terms of assembly, homotetramer. May interact with ABCA1; functionally associated with ABCA1 in the biogenesis of HDLs. May interact with APP/A4 amyloid-beta peptide; the interaction is extremely stable in vitro but its physiological significance is unclear. May interact with MAPT. May interact with MAP2. In the cerebrospinal fluid, interacts with secreted SORL1. Interacts with PMEL; this allows the loading of PMEL luminal fragment on ILVs to induce fibril nucleation. APOE exists as multiple glycosylated and sialylated glycoforms within cells and in plasma. The extent of glycosylation and sialylation are tissue and context specific. In terms of processing, glycated in plasma VLDL. Post-translationally, phosphorylated by FAM20C in the extracellular medium.

Its subcellular location is the secreted. The protein localises to the extracellular space. It localises to the extracellular matrix. The protein resides in the extracellular vesicle. It is found in the endosome. Its subcellular location is the multivesicular body. Functionally, APOE is an apolipoprotein, a protein associating with lipid particles, that mainly functions in lipoprotein-mediated lipid transport between organs via the plasma and interstitial fluids. APOE is a core component of plasma lipoproteins and is involved in their production, conversion and clearance. Apolipoproteins are amphipathic molecules that interact both with lipids of the lipoprotein particle core and the aqueous environment of the plasma. As such, APOE associates with chylomicrons, chylomicron remnants, very low density lipoproteins (VLDL) and intermediate density lipoproteins (IDL) but shows a preferential binding to high-density lipoproteins (HDL). It also binds a wide range of cellular receptors including the LDL receptor/LDLR and the very low-density lipoprotein receptor/VLDLR that mediate the cellular uptake of the APOE-containing lipoprotein particles. Finally, APOE also has a heparin-binding activity and binds heparan-sulfate proteoglycans on the surface of cells, a property that supports the capture and the receptor-mediated uptake of APOE-containing lipoproteins by cells. The polypeptide is Apolipoprotein E (APOE) (Cavia porcellus (Guinea pig)).